Consider the following 375-residue polypeptide: Patatin-1-Kuras 2 (375 aa).

Residues 1 to 11 (MILATTSSTFA) form the signal peptide. A PNPLA domain is found at 20–218 (LSIDGGGIKG…TVADPALLSV (199 aa)). Residues 24–29 (GGGIKG) carry the GXGXXG motif. The GXSXG motif lies at 63-67 (GTSTG). Residue Ser-65 is the Nucleophile of the active site. An N-linked (GlcNAc...) asparagine glycan is attached at Asn-103. The active-site Proton acceptor is the Asp-204. Residues 204-206 (DGA) carry the DGA/G motif. The stretch at 349–373 (ETYEEALKRFAKLLSDRKKLRANKA) forms a coiled coil.

The protein belongs to the patatin family. As to expression, tuber.

It is found in the vacuole. Functionally, probable lipolytic acyl hydrolase (LAH), an activity which is thought to be involved in the response of tubers to pathogens. This Solanum tuberosum (Potato) protein is Patatin-1-Kuras 2 (pat1-k2).